A 188-amino-acid polypeptide reads, in one-letter code: ATP synthase subunit b (188 aa).

A helical membrane pass occupies residues 21-41 (ILPHLGELIVGIIFAIIIYAV).

Belongs to the ATPase B chain family. In terms of assembly, F-type ATPases have 2 components, F(1) - the catalytic core - and F(0) - the membrane proton channel. F(1) has five subunits: alpha(3), beta(3), gamma(1), delta(1), epsilon(1). F(0) has three main subunits: a(1), b(2) and c(10-14). The alpha and beta chains form an alternating ring which encloses part of the gamma chain. F(1) is attached to F(0) by a central stalk formed by the gamma and epsilon chains, while a peripheral stalk is formed by the delta and b chains.

Its subcellular location is the cell membrane. F(1)F(0) ATP synthase produces ATP from ADP in the presence of a proton or sodium gradient. F-type ATPases consist of two structural domains, F(1) containing the extramembraneous catalytic core and F(0) containing the membrane proton channel, linked together by a central stalk and a peripheral stalk. During catalysis, ATP synthesis in the catalytic domain of F(1) is coupled via a rotary mechanism of the central stalk subunits to proton translocation. Its function is as follows. Component of the F(0) channel, it forms part of the peripheral stalk, linking F(1) to F(0). This chain is ATP synthase subunit b, found in Kineococcus radiotolerans (strain ATCC BAA-149 / DSM 14245 / SRS30216).